A 141-amino-acid chain; its full sequence is MLSPKRTRFRKQHRGRLKGISTRGNRICFGRFGLQALEPSWITSRQIEAGRRAITRYARRGGKLWIRIFPDKPITMRPAETRMGSGKGSPEYWVAVVKPGRILYEMSGVSETIARAAMRIAAFKMPIKTQFIKTPVLATIQ.

This sequence belongs to the universal ribosomal protein uL16 family. In terms of assembly, part of the 50S ribosomal subunit.

The protein localises to the plastid. Its subcellular location is the chloroplast. The polypeptide is Large ribosomal subunit protein uL16c (Zygnema circumcarinatum (Green alga)).